The chain runs to 260 residues: Serine protease VLSP-1 (260 aa).

An N-terminal signal peptide occupies residues 1 to 18; the sequence is MVLIRVLANLLVLHLSYA. Residues 19-24 constitute a propeptide that is removed on maturation; the sequence is QKSSEL. The Peptidase S1 domain occupies 25–251; sequence VIGGDECNIN…YSDWIQSIIA (227 aa). 6 disulfides stabilise this stretch: Cys-31–Cys-165, Cys-52–Cys-68, Cys-100–Cys-258, Cys-144–Cys-212, Cys-176–Cys-191, and Cys-202–Cys-227. The N-linked (GlcNAc...) asparagine glycan is linked to Asn-44. His-67 (charge relay system) is an active-site residue. Asn-103 is a glycosylation site (N-linked (GlcNAc...) asparagine). The Charge relay system role is filled by Asp-112. A glycan (N-linked (GlcNAc...) asparagine) is linked at Asn-156. Ser-206 serves as the catalytic Charge relay system.

Belongs to the peptidase S1 family. Snake venom subfamily. In terms of tissue distribution, expressed by the venom gland.

The protein resides in the secreted. Snake venom serine protease that may act in the hemostasis system of the prey. This is Serine protease VLSP-1 from Macrovipera lebetinus (Levantine viper).